We begin with the raw amino-acid sequence, 316 residues long: Ornithine carbamoyltransferase (316 aa).

Carbamoyl phosphate-binding positions include 57 to 60, Q84, R108, and 135 to 138; these read STRT and HPCQ. L-ornithine-binding positions include N166, D230, and 234–235; that span reads SM. Residues 269–270 and R297 contribute to the carbamoyl phosphate site; that span reads CL.

It belongs to the aspartate/ornithine carbamoyltransferase superfamily. OTCase family.

Its subcellular location is the cytoplasm. The enzyme catalyses carbamoyl phosphate + L-ornithine = L-citrulline + phosphate + H(+). It participates in amino-acid degradation; L-arginine degradation via ADI pathway; carbamoyl phosphate from L-arginine: step 2/2. Functionally, reversibly catalyzes the transfer of the carbamoyl group from carbamoyl phosphate (CP) to the N(epsilon) atom of ornithine (ORN) to produce L-citrulline. The sequence is that of Ornithine carbamoyltransferase from Bacillus cereus (strain AH187).